The following is a 375-amino-acid chain: Probable butyrate kinase 2 (375 aa).

The protein belongs to the acetokinase family.

The protein localises to the cytoplasm. The enzyme catalyses butanoate + ATP = butanoyl phosphate + ADP. This is Probable butyrate kinase 2 from Thermotoga maritima (strain ATCC 43589 / DSM 3109 / JCM 10099 / NBRC 100826 / MSB8).